The sequence spans 102 residues: Large ribosomal subunit protein bL21 (102 aa).

It belongs to the bacterial ribosomal protein bL21 family. Part of the 50S ribosomal subunit. Contacts protein L20.

This protein binds to 23S rRNA in the presence of protein L20. The polypeptide is Large ribosomal subunit protein bL21 (Staphylococcus aureus).